Consider the following 437-residue polypeptide: UDP-N-acetylmuramoylalanine--D-glutamate ligase (437 aa).

Residue 112-118 participates in ATP binding; it reads GSNGKST.

Belongs to the MurCDEF family.

It localises to the cytoplasm. The enzyme catalyses UDP-N-acetyl-alpha-D-muramoyl-L-alanine + D-glutamate + ATP = UDP-N-acetyl-alpha-D-muramoyl-L-alanyl-D-glutamate + ADP + phosphate + H(+). Its pathway is cell wall biogenesis; peptidoglycan biosynthesis. Its function is as follows. Cell wall formation. Catalyzes the addition of glutamate to the nucleotide precursor UDP-N-acetylmuramoyl-L-alanine (UMA). The polypeptide is UDP-N-acetylmuramoylalanine--D-glutamate ligase (murD) (Haemophilus influenzae (strain ATCC 51907 / DSM 11121 / KW20 / Rd)).